We begin with the raw amino-acid sequence, 296 residues long: Haloalkane dehalogenase (296 aa).

The AB hydrolase-1 domain occupies 31–155 (PILFQHGNPT…QDRDLFQAFR (125 aa)). A chloride-binding site is contributed by Asn38. Asp108 (nucleophile) is an active-site residue. Trp109 is a binding site for chloride. Glu132 functions as the Proton donor in the catalytic mechanism. The Proton acceptor role is filled by His272.

The protein belongs to the haloalkane dehalogenase family. Type 2 subfamily. In terms of assembly, monomer.

The protein resides in the periplasm. It carries out the reaction 1-haloalkane + H2O = a halide anion + a primary alcohol + H(+). The catalysed reaction is (3R,6R)-1,3,4,6-tetrachlorocyclohexa-1,4-diene + 2 H2O = 2,5-dichlorocyclohexa-2,5-dien-1,4-diol + 2 chloride + 2 H(+). It participates in xenobiotic degradation; gamma-hexachlorocyclohexane degradation. With respect to regulation, competitively inhibited by the key pollutants 1,2-dichloroethane (1,2-DCE) and 1,2-dichloropropane (1,2-DCP). Its function is as follows. Catalyzes hydrolytic cleavage of carbon-halogen bonds in halogenated aliphatic compounds, leading to the formation of the corresponding primary alcohols, halide ions and protons. Has a broad substrate specificity since not only monochloroalkanes (C3 to C10) but also dichloroalkanes (&gt; C3), bromoalkanes, and chlorinated aliphatic alcohols are good substrates. Shows almost no activity with 1,2-dichloroethane, but very high activity with the brominated analog. Is involved in the degradation of the important environmental pollutant gamma-hexachlorocyclohexane (gamma-HCH or lindane) as it also catalyzes conversion of 1,3,4,6-tetrachloro-1,4-cyclohexadiene (1,4-TCDN) to 2,5-dichloro-2,5-cyclohexadiene-1,4-diol (2,5-DDOL) via the intermediate 2,4,5-trichloro-2,5-cyclohexadiene-1-ol (2,4,5-DNOL). This degradation pathway allows S.japonicum UT26 to grow on gamma-HCH as the sole source of carbon and energy. This is Haloalkane dehalogenase from Sphingobium indicum (strain DSM 16413 / CCM 7287 / MTCC 6362 / UT26 / NBRC 101211 / UT26S) (Sphingobium japonicum).